Here is a 652-residue protein sequence, read N- to C-terminus: DNA ligase (652 aa).

NAD(+) contacts are provided by residues 29–33, 78–79, and E107; these read DAEYD and SL. K109 serves as the catalytic N6-AMP-lysine intermediate. The NAD(+) site is built by R130, E164, K278, and K302. C395, C398, C413, and C418 together coordinate Zn(2+). The 76-residue stretch at 577 to 652 folds into the BRCT domain; it reads ASDAALTGMT…IKDEAWLESL (76 aa).

This sequence belongs to the NAD-dependent DNA ligase family. LigA subfamily. The cofactor is Mg(2+). It depends on Mn(2+) as a cofactor.

The catalysed reaction is NAD(+) + (deoxyribonucleotide)n-3'-hydroxyl + 5'-phospho-(deoxyribonucleotide)m = (deoxyribonucleotide)n+m + AMP + beta-nicotinamide D-nucleotide.. Functionally, DNA ligase that catalyzes the formation of phosphodiester linkages between 5'-phosphoryl and 3'-hydroxyl groups in double-stranded DNA using NAD as a coenzyme and as the energy source for the reaction. It is essential for DNA replication and repair of damaged DNA. This is DNA ligase from Streptococcus mutans serotype c (strain ATCC 700610 / UA159).